The sequence spans 208 residues: Large ribosomal subunit protein uL4 (208 aa).

The interval 44–85 (RQGTKKTKTRAEVRGGGKKPWRQKGTGRARQGSIRAPHWRGG) is disordered. Residues 59-70 (GGKKPWRQKGTG) show a composition bias toward basic residues.

Belongs to the universal ribosomal protein uL4 family. As to quaternary structure, part of the 50S ribosomal subunit.

Its function is as follows. One of the primary rRNA binding proteins, this protein initially binds near the 5'-end of the 23S rRNA. It is important during the early stages of 50S assembly. It makes multiple contacts with different domains of the 23S rRNA in the assembled 50S subunit and ribosome. Functionally, forms part of the polypeptide exit tunnel. This chain is Large ribosomal subunit protein uL4, found in Mesoplasma florum (strain ATCC 33453 / NBRC 100688 / NCTC 11704 / L1) (Acholeplasma florum).